The primary structure comprises 467 residues: 3-isopropylmalate dehydratase large subunit (467 aa).

[4Fe-4S] cluster is bound by residues C347, C407, and C410. Over residues 422 to 442 (QISASSSNRNFKGRQGSSSGR) the composition is skewed to polar residues. Residues 422–443 (QISASSSNRNFKGRQGSSSGRT) form a disordered region.

The protein belongs to the aconitase/IPM isomerase family. LeuC type 1 subfamily. Heterodimer of LeuC and LeuD. It depends on [4Fe-4S] cluster as a cofactor.

The catalysed reaction is (2R,3S)-3-isopropylmalate = (2S)-2-isopropylmalate. It functions in the pathway amino-acid biosynthesis; L-leucine biosynthesis; L-leucine from 3-methyl-2-oxobutanoate: step 2/4. Functionally, catalyzes the isomerization between 2-isopropylmalate and 3-isopropylmalate, via the formation of 2-isopropylmaleate. The sequence is that of 3-isopropylmalate dehydratase large subunit from Nostoc punctiforme (strain ATCC 29133 / PCC 73102).